Reading from the N-terminus, the 347-residue chain is MKNTFNTSVFANAYSFWGYVIGFILSTSNRLYIGWFGILMFPLLVLATVAFISAFIFAPPVDIDGIREPVAGALLYGNNIISGAVIPSSNAIGVHFYPVWEALGFDEWLYNGGTYQFVVLHFILGAGAYMGREWEFAFRLGMRPWIFVAFSAPLVAASAVFVVYPIGQGSFSDGMPLGISGTFNFMLVFQAEHNILMHPFHILGVAAVFGGSLFSAMHGSLVTSSLLAETAGDLSLNVGYNFGQEDETYSISAAHGYFGRLIFQYASFNNSRSLHFFLAAWPVIGIWFTALGVSTMAFNLNGLNFNQSIIDSSGHLINSWADIVNRADLGMEVMHERNAHNFPLDLA.

Helical transmembrane passes span 32-49 (YIGWFGILMFPLLVLATV), 121-136 (HFILGAGAYMGREWEF), and 145-159 (WIFVAFSAPLVAASA). A chlorophyll a-binding site is contributed by His121. Tyr129 provides a ligand contact to pheophytin a. Positions 173 and 192 each coordinate [CaMn4O5] cluster. The helical transmembrane segment at 200–221 (FHILGVAAVFGGSLFSAMHGSL) threads the bilayer. Residue His201 coordinates chlorophyll a. A quinone is bound by residues His218 and 267–268 (SF). Residue His218 coordinates Fe cation. Position 275 (His275) interacts with Fe cation. A helical membrane pass occupies residues 277-291 (FLAAWPVIGIWFTAL). His335, Glu336, Asp345, and Ala347 together coordinate [CaMn4O5] cluster.

It belongs to the reaction center PufL/M/PsbA/D family. In terms of assembly, PSII is composed of 1 copy each of membrane proteins PsbA, PsbB, PsbC, PsbD, PsbE, PsbF, PsbH, PsbI, PsbJ, PsbK, PsbL, PsbM, PsbT, PsbX, PsbY, PsbZ, Psb30/Ycf12, at least 3 peripheral proteins of the oxygen-evolving complex and a large number of cofactors. It forms dimeric complexes. The D1/D2 heterodimer binds P680, chlorophylls that are the primary electron donor of PSII, and subsequent electron acceptors. It shares a non-heme iron and each subunit binds pheophytin, quinone, additional chlorophylls, carotenoids and lipids. D1 provides most of the ligands for the Mn4-Ca-O5 cluster of the oxygen-evolving complex (OEC). There is also a Cl(-1) ion associated with D1 and D2, which is required for oxygen evolution. The PSII complex binds additional chlorophylls, carotenoids and specific lipids. is required as a cofactor. Post-translationally, tyr-164 forms a radical intermediate that is referred to as redox-active TyrZ, YZ or Y-Z.

It localises to the plastid. Its subcellular location is the chloroplast thylakoid membrane. It carries out the reaction 2 a plastoquinone + 4 hnu + 2 H2O = 2 a plastoquinol + O2. Its function is as follows. Photosystem II (PSII) is a light-driven water:plastoquinone oxidoreductase that uses light energy to abstract electrons from H(2)O, generating O(2) and a proton gradient subsequently used for ATP formation. It consists of a core antenna complex that captures photons, and an electron transfer chain that converts photonic excitation into a charge separation. The D1/D2 (PsbA/PsbD) reaction center heterodimer binds P680, the primary electron donor of PSII as well as several subsequent electron acceptors. The polypeptide is Photosystem II protein D1 (Heterocapsa niei (Dinoflagellate)).